The sequence spans 97 residues: Co-chaperonin GroES (97 aa).

It belongs to the GroES chaperonin family. In terms of assembly, heptamer of 7 subunits arranged in a ring. Interacts with the chaperonin GroEL.

Its subcellular location is the cytoplasm. In terms of biological role, together with the chaperonin GroEL, plays an essential role in assisting protein folding. The GroEL-GroES system forms a nano-cage that allows encapsulation of the non-native substrate proteins and provides a physical environment optimized to promote and accelerate protein folding. GroES binds to the apical surface of the GroEL ring, thereby capping the opening of the GroEL channel. The sequence is that of Co-chaperonin GroES from Pectobacterium atrosepticum (strain SCRI 1043 / ATCC BAA-672) (Erwinia carotovora subsp. atroseptica).